The sequence spans 551 residues: MSGGDGRGHNTGAHSTSGNINGGPTGLGVGGGASDGSGWSSENNPWGGGSGSGIHWGGGSGHGNGGGNGNSGGGSGTGGNLSAVAAPVAFGFPALSTPGAGGLAVSISAGALSAAIADIMAALKGPFKFGLWGVALYGVLPSQIAKDDPNMMSKIVTSLPADDITESPVSSLPLDKATVNVNVRVVDDVKDERQNISVVSGVPMSVPVVDAKPTERPGVFTASIPGAPVLNISVNNSTPAVQTLSPGVTNNTDKDVRPAGFTQGGNTRDAVIRFPKDSGHNAVYVSVSDVLSPDQVKQRQDEENRRQQEWDATHPVEAAERNYERARAELNQANEDVARNQERQAKAVQVYNSRKSELDAANKTLADAIAEIKQFNRFAHDPMAGGHRMWQMAGLKAQRAQTDVNNKQAAFDAAAKEKSDADAALSSAMESRKKKEDKKRSAENKLNEEKNKPRKGVKDYGHDYHPDPKTEDIKGLGELKEGKPKTPKQGGGGKRARWYGDKGRKIYEWDSQHGELEGYRASDGQHLGSFEPKTGNQLKGPDPKRNIKKYL.

Disordered regions lie at residues M1–G74, L244–D269, P293–E317, N406–D501, and E517–L551. The segment covering I20 to D35 has biased composition (gly residues). Low complexity predominate over residues G36–P45. Gly residues predominate over residues W46 to G74. Basic and acidic residues-rich tracts occupy residues V296–E317 and E430–P484. The segment at K455–L551 is ribosome inactivating activity. Residues F530–L551 are binding of immunity protein.

Belongs to the cloacin colicin family.

Functionally, inactivates ribosomes by hydrolyzing 16S RNA in 30S ribosomes at a specific site. Colicins are polypeptide toxins produced by and active against E.coli and closely related bacteria. This is Colicin-E6 from Escherichia coli.